Consider the following 626-residue polypeptide: (+)-3-carene synthase 1, chloroplastic (626 aa).

A chloroplast-targeting transit peptide spans 1-45 (MSLISAVPLASSCVSKSLISSVREHKALRRAIATLQMSRPGKSVA). Mg(2+) is bound by residues aspartate 377, aspartate 381, and aspartate 529. Positions 377 to 381 (DDMYD) match the DDXXD motif motif.

It belongs to the terpene synthase family. Tpsd subfamily. Requires Mg(2+) as cofactor. Mn(2+) is required as a cofactor.

The protein resides in the plastid. It is found in the chloroplast. The catalysed reaction is (2E)-geranyl diphosphate = (+)-car-3-ene + diphosphate. It catalyses the reaction (2E)-geranyl diphosphate = terpinolene + diphosphate. The protein operates within terpene metabolism; oleoresin biosynthesis. It participates in secondary metabolite biosynthesis; terpenoid biosynthesis. Functionally, monoterpene synthase (TPS) involved in the biosynthesis of monoterpene natural products included in conifer oleoresin secretions and volatile emissions; these compounds contribute to biotic and abiotic stress defense against herbivores and pathogens. Catalyzes the conversion of (2E)-geranyl diphosphate (GPP) to (+)-3-carene and, to a lower extent, to terpinolene. The protein is (+)-3-carene synthase 1, chloroplastic of Pinus banksiana (Jack pine).